We begin with the raw amino-acid sequence, 213 residues long: Nicolin-1 (213 aa).

Part of the neuronal tubulin polyglutamylase complex which contains TPGS1, TPGS2, TTLL1, LRRC49 and NICN1. High expression level is found in brain, testis, liver and kidney. Weak expression in spleen, leukocytes, small intestine and colon.

The protein localises to the nucleus. This is Nicolin-1 (NICN1) from Homo sapiens (Human).